Consider the following 247-residue polypeptide: Adenosylcobinamide-GDP ribazoletransferase (247 aa).

6 helical membrane-spanning segments follow: residues 31–51 (ILFYPLVGLIIGGILFLVTCI), 55–75 (LPALLLAAIVLALWIWLTGGL), 109–129 (IGVLSLVIICLLKFALVYVLI), 135–155 (LFLICIPILGRVVPSILFLTT), 183–203 (VLLLPLYWGWQGLIAIIGFLI), and 227–247 (AIEIGETVLMFTFVVSYFYLV).

It belongs to the CobS family. Mg(2+) serves as cofactor.

The protein localises to the cell inner membrane. It catalyses the reaction alpha-ribazole + adenosylcob(III)inamide-GDP = adenosylcob(III)alamin + GMP + H(+). The catalysed reaction is alpha-ribazole 5'-phosphate + adenosylcob(III)inamide-GDP = adenosylcob(III)alamin 5'-phosphate + GMP + H(+). The protein operates within cofactor biosynthesis; adenosylcobalamin biosynthesis; adenosylcobalamin from cob(II)yrinate a,c-diamide: step 7/7. Functionally, joins adenosylcobinamide-GDP and alpha-ribazole to generate adenosylcobalamin (Ado-cobalamin). Also synthesizes adenosylcobalamin 5'-phosphate from adenosylcobinamide-GDP and alpha-ribazole 5'-phosphate. The sequence is that of Adenosylcobinamide-GDP ribazoletransferase from Acinetobacter baumannii (strain ATCC 17978 / DSM 105126 / CIP 53.77 / LMG 1025 / NCDC KC755 / 5377).